Reading from the N-terminus, the 244-residue chain is 7-cyano-7-deazaguanine synthase (244 aa).

Residue 14 to 24 (FSGGQDSATCL) participates in ATP binding. Zn(2+) contacts are provided by cysteine 202, cysteine 217, cysteine 220, and cysteine 223.

Belongs to the QueC family. Zn(2+) is required as a cofactor.

The catalysed reaction is 7-carboxy-7-deazaguanine + NH4(+) + ATP = 7-cyano-7-deazaguanine + ADP + phosphate + H2O + H(+). It functions in the pathway purine metabolism; 7-cyano-7-deazaguanine biosynthesis. In terms of biological role, catalyzes the ATP-dependent conversion of 7-carboxy-7-deazaguanine (CDG) to 7-cyano-7-deazaguanine (preQ(0)). This Paraburkholderia phytofirmans (strain DSM 17436 / LMG 22146 / PsJN) (Burkholderia phytofirmans) protein is 7-cyano-7-deazaguanine synthase.